A 690-amino-acid polypeptide reads, in one-letter code: Elongation factor G (690 aa).

The 276-residue stretch at 8–283 (EDYRNFGIMA…AVVAYLPSPL (276 aa)) folds into the tr-type G domain. GTP-binding positions include 17-24 (AHIDAGKT), 81-85 (DTPGH), and 135-138 (NKMD).

It belongs to the TRAFAC class translation factor GTPase superfamily. Classic translation factor GTPase family. EF-G/EF-2 subfamily.

It is found in the cytoplasm. Functionally, catalyzes the GTP-dependent ribosomal translocation step during translation elongation. During this step, the ribosome changes from the pre-translocational (PRE) to the post-translocational (POST) state as the newly formed A-site-bound peptidyl-tRNA and P-site-bound deacylated tRNA move to the P and E sites, respectively. Catalyzes the coordinated movement of the two tRNA molecules, the mRNA and conformational changes in the ribosome. The protein is Elongation factor G of Nitrobacter winogradskyi (strain ATCC 25391 / DSM 10237 / CIP 104748 / NCIMB 11846 / Nb-255).